Here is a 229-residue protein sequence, read N- to C-terminus: Cytidylate kinase (229 aa).

10-18 is an ATP binding site; the sequence is GYSSCGKST.

The protein belongs to the cytidylate kinase family. Type 1 subfamily.

The protein localises to the cytoplasm. The catalysed reaction is CMP + ATP = CDP + ADP. The enzyme catalyses dCMP + ATP = dCDP + ADP. The protein is Cytidylate kinase of Phocaeicola vulgatus (strain ATCC 8482 / DSM 1447 / JCM 5826 / CCUG 4940 / NBRC 14291 / NCTC 11154) (Bacteroides vulgatus).